We begin with the raw amino-acid sequence, 217 residues long: Large ribosomal subunit protein uL3 (217 aa).

Positions 129–161 are disordered; the sequence is SRGPMSHGSKNHRAPGSTGAGTTPGRIYPGKRM. Positions 142–153 are enriched in low complexity; the sequence is APGSTGAGTTPG.

Belongs to the universal ribosomal protein uL3 family. In terms of assembly, part of the 50S ribosomal subunit. Forms a cluster with proteins L14 and L19.

Its function is as follows. One of the primary rRNA binding proteins, it binds directly near the 3'-end of the 23S rRNA, where it nucleates assembly of the 50S subunit. This chain is Large ribosomal subunit protein uL3, found in Prochlorococcus marinus subsp. pastoris (strain CCMP1986 / NIES-2087 / MED4).